The following is a 127-amino-acid chain: D-ribose pyranase (127 aa).

His20 functions as the Proton donor in the catalytic mechanism. Substrate contacts are provided by residues Asp28, His94, and 116–118; that span reads YSN.

This sequence belongs to the RbsD / FucU family. RbsD subfamily. As to quaternary structure, homodecamer.

It localises to the cytoplasm. It carries out the reaction beta-D-ribopyranose = beta-D-ribofuranose. Its pathway is carbohydrate metabolism; D-ribose degradation; D-ribose 5-phosphate from beta-D-ribopyranose: step 1/2. Its function is as follows. Catalyzes the interconversion of beta-pyran and beta-furan forms of D-ribose. In Cutibacterium acnes (strain DSM 16379 / KPA171202) (Propionibacterium acnes), this protein is D-ribose pyranase.